The chain runs to 816 residues: Lon protease (816 aa).

The region spanning 27-221 is the Lon N-terminal domain; that stretch reads LPLLPIRDVV…KVNDLLAREH (195 aa). An ATP-binding site is contributed by 372-379; sequence GPPGVGKT. Residues 608 to 789 enclose the Lon proteolytic domain; it reads KNEVGVVNGL…DEVLKLALEK (182 aa). Active-site residues include serine 695 and lysine 738. The segment at 795-816 is disordered; sequence PKGKAKPATPKVVVRPSKEISA. The span at 800–809 shows a compositional bias: low complexity; the sequence is KPATPKVVVR.

It belongs to the peptidase S16 family. In terms of assembly, homohexamer. Organized in a ring with a central cavity.

It localises to the cytoplasm. The catalysed reaction is Hydrolysis of proteins in presence of ATP.. Functionally, ATP-dependent serine protease that mediates the selective degradation of mutant and abnormal proteins as well as certain short-lived regulatory proteins. Required for cellular homeostasis and for survival from DNA damage and developmental changes induced by stress. Degrades polypeptides processively to yield small peptide fragments that are 5 to 10 amino acids long. Binds to DNA in a double-stranded, site-specific manner. This chain is Lon protease, found in Trichlorobacter lovleyi (strain ATCC BAA-1151 / DSM 17278 / SZ) (Geobacter lovleyi).